A 141-amino-acid chain; its full sequence is MAKKVTGMIKLQLQAGKATPAPPVGPALGQHGVNIMGFCKEFNAKTANQAGLIIPVVITVYQDRSFSFILKTPPAAVLIKKELGLESGSGVPNRTKVGSLTKEQVKKIAETKMPDLNAASIETAMKMIEGTARSMGVTIQE.

This sequence belongs to the universal ribosomal protein uL11 family. In terms of assembly, part of the ribosomal stalk of the 50S ribosomal subunit. Interacts with L10 and the large rRNA to form the base of the stalk. L10 forms an elongated spine to which L12 dimers bind in a sequential fashion forming a multimeric L10(L12)X complex. One or more lysine residues are methylated.

Functionally, forms part of the ribosomal stalk which helps the ribosome interact with GTP-bound translation factors. This is Large ribosomal subunit protein uL11 from Clostridium botulinum (strain Alaska E43 / Type E3).